We begin with the raw amino-acid sequence, 113 residues long: Putative hemolysin E-like protein (113 aa).

The protein belongs to the hemolysin E family.

In Shigella flexneri, this protein is Putative hemolysin E-like protein.